The sequence spans 413 residues: Divalent metal cation transporter MntH (413 aa).

The Cytoplasmic portion of the chain corresponds to 1–19; the sequence is MTDNRVENSSGRAARKLRL. Residues 20 to 39 traverse the membrane as a helical segment; sequence ALMGPAFIAAIGYIDPGNFA. The Periplasmic portion of the chain corresponds to 40 to 51; that stretch reads TNIQAGASFGYQ. The helical transmembrane segment at 52–71 threads the bilayer; that stretch reads LLWVVVWANLMAMLIQILSA. The Cytoplasmic segment spans residues 72–95; the sequence is KLGIATGKNLAEQIRDHYPRPVVW. Residues 96 to 118 form a helical membrane-spanning segment; that stretch reads FYWVQAEIIAMATDLAEFIGAAI. Residues 119–125 lie on the Periplasmic side of the membrane; that stretch reads GFKLILG. The helical transmembrane segment at 126 to 145 threads the bilayer; that stretch reads VSLLQGAVLTGIATFLILML. Residues 146-155 are Cytoplasmic-facing; the sequence is QRRGQKPLEK. A helical transmembrane segment spans residues 156–175; it reads VIGGLLLFVAAAYIVELFFS. Residues 176 to 196 are Periplasmic-facing; sequence QPDMAQLGKGMVIPALPNPEA. A helical transmembrane segment spans residues 197–220; the sequence is VFLAAGVLGATIMPHVIYLHSSLT. The Cytoplasmic portion of the chain corresponds to 221-238; sequence QHLHGGTRQQRYSATKWD. Residues 239–258 traverse the membrane as a helical segment; that stretch reads VAIAMTIAGFVNLAMMATAA. The Periplasmic segment spans residues 259 to 276; that stretch reads AAFHFSGHTGIADLDQAY. A helical membrane pass occupies residues 277–297; that stretch reads LTLEPLLSHAAATVFGLSLVA. Topologically, residues 298–327 are cytoplasmic; sequence AGLSSTVVGTLAGQVVMQGFVRFHIPLWVR. The chain crosses the membrane as a helical span at residues 328–344; that stretch reads RSITMLPSFIVILMGLD. Residues 345-350 are Periplasmic-facing; sequence PTRILV. The chain crosses the membrane as a helical span at residues 351-370; sequence MSQVLLSFGIALALVPLLIF. Topologically, residues 371–387 are cytoplasmic; that stretch reads TSNATLMGELVNTRRVK. A helical membrane pass occupies residues 388-406; the sequence is QIGWIIVVLVVALNIWLLV. Residues 407-413 lie on the Periplasmic side of the membrane; sequence GTVMGLS.

This sequence belongs to the NRAMP family.

It localises to the cell inner membrane. H(+)-stimulated, divalent metal cation uptake system. The sequence is that of Divalent metal cation transporter MntH from Salmonella gallinarum (strain 287/91 / NCTC 13346).